The following is a 156-amino-acid chain: Small ribosomal subunit protein uS7 (156 aa).

The protein belongs to the universal ribosomal protein uS7 family. In terms of assembly, part of the 30S ribosomal subunit. Contacts proteins S9 and S11.

In terms of biological role, one of the primary rRNA binding proteins, it binds directly to 16S rRNA where it nucleates assembly of the head domain of the 30S subunit. Is located at the subunit interface close to the decoding center, probably blocks exit of the E-site tRNA. The protein is Small ribosomal subunit protein uS7 of Acaryochloris marina (strain MBIC 11017).